Here is a 268-residue protein sequence, read N- to C-terminus: Protein MGF 300-1L (268 aa).

Over 1 to 175 the chain is Cytoplasmic; that stretch reads MVSLTTYCLK…QTFKTFYAKN (175 aa). A helical transmembrane segment spans residues 176–193; that stretch reads YSLSTLYCIFLAIYYKLY. Over 194 to 268 the chain is Extracellular; sequence MALRKMVKIY…MYAFSQNNFW (75 aa).

This sequence belongs to the asfivirus MGF 300 family.

It localises to the host membrane. Functionally, plays a role in virus cell tropism, and may be required for efficient virus replication in macrophages. The polypeptide is Protein MGF 300-1L (African swine fever virus (isolate Tick/Malawi/Lil 20-1/1983) (ASFV)).